The chain runs to 209 residues: Nascent polypeptide-associated complex subunit alpha-like protein 5 (209 aa).

The interval 23-71 is disordered; sequence EKEDDVVVEDVKDGEEEDDDEDDEDVEVEGEGGNENAKQSRSEKKSRKA. The span at 25–54 shows a compositional bias: acidic residues; sequence EDDVVVEDVKDGEEEDDDEDDEDVEVEGEG. One can recognise an NAC-A/B domain in the interval 62–127; the sequence is SRSEKKSRKA…AKVDDLSSQL (66 aa). In terms of domain architecture, UBA spans 170-207; the sequence is VEARDIDLVMTQAGVSKAKAVSALKANDGDIVSAIMEL.

This sequence belongs to the NAC-alpha family.

In terms of biological role, may promote appropriate targeting of ribosome-nascent polypeptide complexes. In Arabidopsis thaliana (Mouse-ear cress), this protein is Nascent polypeptide-associated complex subunit alpha-like protein 5.